A 651-amino-acid polypeptide reads, in one-letter code: Threonine--tRNA ligase (651 aa).

The region spanning 1–64 (MSSVVHVTLP…EKDCTLQVLT (64 aa)) is the TGS domain. The segment at 245–535 (DHRRLGPELG…LTEHYAGNFP (291 aa)) is catalytic. Residues cysteine 336, histidine 387, and histidine 512 each contribute to the Zn(2+) site.

Belongs to the class-II aminoacyl-tRNA synthetase family. As to quaternary structure, homodimer. Requires Zn(2+) as cofactor.

The protein localises to the cytoplasm. The enzyme catalyses tRNA(Thr) + L-threonine + ATP = L-threonyl-tRNA(Thr) + AMP + diphosphate + H(+). Functionally, catalyzes the attachment of threonine to tRNA(Thr) in a two-step reaction: L-threonine is first activated by ATP to form Thr-AMP and then transferred to the acceptor end of tRNA(Thr). Also edits incorrectly charged L-seryl-tRNA(Thr). This is Threonine--tRNA ligase from Symbiobacterium thermophilum (strain DSM 24528 / JCM 14929 / IAM 14863 / T).